We begin with the raw amino-acid sequence, 360 residues long: Uptake hydrogenase small subunit (360 aa).

The tat-type signal signal peptide spans 1–46 (MATAETFYDVIRRQGITRRSFTKFCSLTAASLGFGPGAATAMAEAL). Residues Cys62, Cys65, Cys160, Cys194, His232, Cys235, Cys260, and Cys266 each contribute to the [4Fe-4S] cluster site. Cys275, Cys294, and Cys297 together coordinate [3Fe-4S] cluster.

It belongs to the [NiFe]/[NiFeSe] hydrogenase small subunit family. Heterodimer of a large and a small subunit. The cofactor is [4Fe-4S] cluster. It depends on [3Fe-4S] cluster as a cofactor. In terms of processing, predicted to be exported by the Tat system. The position of the signal peptide cleavage has not been experimentally proven.

It localises to the cell membrane. It catalyses the reaction H2 + A = AH2. Its function is as follows. This enzyme recycles the H(2) produced by nitrogenase to increase the production of ATP and to protect nitrogenase against inhibition or damage by O(2) under carbon- or phosphate-limited conditions. This Rhizobium leguminosarum bv. viciae protein is Uptake hydrogenase small subunit (hupA).